The chain runs to 607 residues: Glycerophosphodiester phosphodiesterase domain-containing protein 5 (607 aa).

At 1 to 42 the chain is on the cytoplasmic side; the sequence is MVRHQPLQYYEPQLCLSCLTGIYGCRWKRYQRSHDDTTPWER. 2 disulfide bridges follow: Cys15–Cys18 and Cys25–Cys571. A helical transmembrane segment spans residues 43 to 63; that stretch reads LWFLLLVCTFSLTLTWLYFWW. Residues 64–89 are Extracellular-facing; the sequence is GVHNDYDEFNWYLYNRMGYWSDWSVP. Residues 90-110 traverse the membrane as a helical segment; it reads ILVTSAAAFTYIAGLLVLALC. Residues 111 to 125 are Cytoplasmic-facing; that stretch reads HIAVGQQLNLHWIHK. The chain crosses the membrane as a helical span at residues 126-146; it reads MGLVVILASTVVAMSAVAQLW. Residues 147–160 lie on the Extracellular side of the membrane; it reads EDEWEVLLISLQGT. Residues 161–181 traverse the membrane as a helical segment; it reads APFLHIGALVAITALSWIVAG. Residues 182 to 192 lie on the Cytoplasmic side of the membrane; that stretch reads QFARAERSSSQ. Residues 193–213 form a helical membrane-spanning segment; sequence LTILCTFFAVVFTFYLIPLTI. Residues 214–496 are Extracellular-facing; that stretch reads SSPCIMEKKD…PLWIMPPDEY (283 aa). A GP-PDE domain is found at 228-485; the sequence is PALIGHRGAP…DNSHTLSRVP (258 aa). Residues Asn301, Asn336, Asn352, Asn374, and Asn448 are each glycosylated (N-linked (GlcNAc...) asparagine). The helical transmembrane segment at 497–517 threads the bilayer; it reads CLMWVTADLISFSLIIGIFVL. Residues 518-607 are Cytoplasmic-facing; that stretch reads QKWRLGGIRS…AKTVTEQSGH (90 aa). Residues 582-607 form a disordered region; the sequence is ANSTATPVGPRNAGSRAKTVTEQSGH.

The protein belongs to the glycerophosphoryl diester phosphodiesterase family. In terms of assembly, interacts with PRDX1; forms a mixed-disulfide with PRDX1, leading to disrupt intramolecular disulfide bond between Cys-25 and Cys-571. Intramolecular disulfide bond between Cys-25 and Cys-571 is reduced by PRDX1. As to expression, detected in brain, lung, heart, kidney and testis.

It localises to the endomembrane system. The protein resides in the cytoplasm. Its subcellular location is the perinuclear region. The protein localises to the cell projection. It is found in the growth cone. The enzyme catalyses a 1,2-diacyl-sn-glycero-3-phospho-(1D-myo-inositol-4,5-bisphosphate) + H2O = 1D-myo-inositol 1,4,5-trisphosphate + a 1,2-diacyl-sn-glycerol + H(+). The catalysed reaction is sn-glycerol 3-phosphocholine + H2O = sn-glycerol 3-phosphate + choline + H(+). Inhibited by high level of NaCl or urea. Functionally, glycerophosphodiester phosphodiesterase that promotes neurite formation and drives spinal motor neuron differentiation. Mediates the cleavage of glycosylphosphatidylinositol (GPI) anchor of target proteins: removes the GPI-anchor of RECK, leading to release RECK from the plasma membrane. May contribute to the osmotic regulation of cellular glycerophosphocholine. This chain is Glycerophosphodiester phosphodiesterase domain-containing protein 5, found in Mus musculus (Mouse).